Reading from the N-terminus, the 205-residue chain is Holliday junction branch migration complex subunit RuvA (205 aa).

A domain I region spans residues 1 to 64; that stretch reads MIGRIRGLLV…EDAQLLYGFI (64 aa). Residues 65 to 143 are domain II; the sequence is SKQERALFRL…SLMEASVGSE (79 aa). A flexible linker region spans residues 144–156; sequence REFMLQSNYTAPV. The segment at 157 to 205 is domain III; sequence VANTAEEDAIAALLSLGYKPAQASKAVSAVYVDGIDSESLIKSALKSML.

It belongs to the RuvA family. In terms of assembly, homotetramer. Forms an RuvA(8)-RuvB(12)-Holliday junction (HJ) complex. HJ DNA is sandwiched between 2 RuvA tetramers; dsDNA enters through RuvA and exits via RuvB. An RuvB hexamer assembles on each DNA strand where it exits the tetramer. Each RuvB hexamer is contacted by two RuvA subunits (via domain III) on 2 adjacent RuvB subunits; this complex drives branch migration. In the full resolvosome a probable DNA-RuvA(4)-RuvB(12)-RuvC(2) complex forms which resolves the HJ.

It localises to the cytoplasm. Functionally, the RuvA-RuvB-RuvC complex processes Holliday junction (HJ) DNA during genetic recombination and DNA repair, while the RuvA-RuvB complex plays an important role in the rescue of blocked DNA replication forks via replication fork reversal (RFR). RuvA specifically binds to HJ cruciform DNA, conferring on it an open structure. The RuvB hexamer acts as an ATP-dependent pump, pulling dsDNA into and through the RuvAB complex. HJ branch migration allows RuvC to scan DNA until it finds its consensus sequence, where it cleaves and resolves the cruciform DNA. This is Holliday junction branch migration complex subunit RuvA from Shewanella piezotolerans (strain WP3 / JCM 13877).